Reading from the N-terminus, the 79-residue chain is uncharacterized protein (79 aa).

This is an uncharacterized protein from Escherichia coli O6:H1 (strain CFT073 / ATCC 700928 / UPEC).